The following is a 245-amino-acid chain: Pyridoxine 5'-phosphate synthase (245 aa).

3-amino-2-oxopropyl phosphate is bound at residue asparagine 7. A 1-deoxy-D-xylulose 5-phosphate-binding site is contributed by 9–10 (DH). 3-amino-2-oxopropyl phosphate is bound at residue arginine 18. Catalysis depends on histidine 43, which acts as the Proton acceptor. The 1-deoxy-D-xylulose 5-phosphate site is built by arginine 45 and histidine 50. Residue glutamate 70 is the Proton acceptor of the active site. Residue threonine 100 coordinates 1-deoxy-D-xylulose 5-phosphate. Histidine 190 acts as the Proton donor in catalysis. 3-amino-2-oxopropyl phosphate-binding positions include glycine 191 and 212-213 (GH).

This sequence belongs to the PNP synthase family. As to quaternary structure, homooctamer; tetramer of dimers.

It localises to the cytoplasm. The enzyme catalyses 3-amino-2-oxopropyl phosphate + 1-deoxy-D-xylulose 5-phosphate = pyridoxine 5'-phosphate + phosphate + 2 H2O + H(+). Its pathway is cofactor biosynthesis; pyridoxine 5'-phosphate biosynthesis; pyridoxine 5'-phosphate from D-erythrose 4-phosphate: step 5/5. Its function is as follows. Catalyzes the complicated ring closure reaction between the two acyclic compounds 1-deoxy-D-xylulose-5-phosphate (DXP) and 3-amino-2-oxopropyl phosphate (1-amino-acetone-3-phosphate or AAP) to form pyridoxine 5'-phosphate (PNP) and inorganic phosphate. In Prochlorococcus marinus (strain NATL2A), this protein is Pyridoxine 5'-phosphate synthase.